The primary structure comprises 1050 residues: uncharacterized protein (1050 aa).

Residues 1 to 83 (MARLLTKSSQ…AVKLGTFEGC (83 aa)) are Cytoplasmic-facing. Phosphoserine occurs at positions 9 and 60. Thr-64 is subject to Phosphothreonine. The helical transmembrane segment at 84-104 (FIPTTLNVLSILLYLRFPWII) threads the bilayer. Over 105 to 112 (GEAGVLKT) the chain is Extracellular. The helical transmembrane segment at 113-133 (LLMLFISYAVGIFTSLSISAI) threads the bilayer. The Cytoplasmic segment spans residues 134–146 (CTNGMVRGGGAYY). The chain crosses the membrane as a helical span at residues 147 to 169 (AVSRSIGPELGGSIGLIFYVGQI). The Extracellular segment spans residues 170 to 202 (LNTGMNISGFVEPIISIFGKESGTISQFLPEGY). N-linked (GlcNAc...) asparagine glycosylation is present at Asn-175. A helical transmembrane segment spans residues 203-223 (WWVFLYTTCVLAMCCILCCLG). Topologically, residues 224–232 (SAIFAKASN) are cytoplasmic. The chain crosses the membrane as a helical span at residues 233–253 (ALFVVIILSTISIPISSIFVH). Residues 254–295 (PFKDPSLLVHFTGLKWSTLMKNLASAYTENEKGTGYESFKST) are Extracellular-facing. Ser-270 is modified (phosphoserine). Thr-271 carries the phosphothreonine modification. Residues 296-316 (FGVFFPATAGLLAGASMSGDL) form a helical membrane-spanning segment. The Cytoplasmic portion of the chain corresponds to 317 to 334 (KAPSRSIPKGTISSQATT). Residues 335–355 (FLLYLLVILCVGASVTRTGLL) traverse the membrane as a helical segment. The Extracellular portion of the chain corresponds to 356–368 (LDMDVMEHISLHP). Residues 369 to 389 (LFIISGILSSGAFSSFMGIFG) form a helical membrane-spanning segment. Over 390 to 417 (AAKLLQAIARDDLIPGMFFFAKGSSYDD) the chain is Cytoplasmic. A helical membrane pass occupies residues 418 to 438 (IPYVAIGVTYLITQISLFWDI). Residues 439 to 442 (NMLS) lie on the Extracellular side of the membrane. Residues 443–463 (SMITMTFLLTFGFINLSCFLL) form a helical membrane-spanning segment. Residues 464–480 (RISSTPNFRPTFRYFNR) lie on the Cytoplasmic side of the membrane. A helical membrane pass occupies residues 481–497 (RTTLVGTILSFGVMFYV). Over 498-499 (DR) the chain is Extracellular. A helical membrane pass occupies residues 500–520 (LNAFISFLIAGILVVVIYFTC). Residues 521-1050 (PPKNWGDVSQ…SKSLTITTAL (530 aa)) lie on the Cytoplasmic side of the membrane. Ser-901 carries the phosphoserine modification. The tract at residues 915 to 943 (ETESSFGNRSLSPKQENRRTYSDSTIESS) is disordered. Over residues 916–928 (TESSFGNRSLSPK) the composition is skewed to polar residues. Residue Ser-936 is modified to Phosphoserine. Position 939 is a phosphothreonine (Thr-939).

Belongs to the SLC12A transporter family.

The protein localises to the membrane. This is an uncharacterized protein from Schizosaccharomyces pombe (strain 972 / ATCC 24843) (Fission yeast).